The following is an 872-amino-acid chain: Bifunctional heparan sulfate N-deacetylase/N-sulfotransferase 4 (872 aa).

Topologically, residues 1 to 13 (MNLILKFRRSFRT) are cytoplasmic. Residues 14–34 (LIVLLATFCLVSILISAYFLY) form a helical; Signal-anchor for type II membrane protein membrane-spanning segment. Residues 35–872 (SGYKQEMTLI…WLRQELQKVR (838 aa)) lie on the Lumenal side of the membrane. Residues 36–588 (GYKQEMTLIE…KRHKDIWSRE (553 aa)) form a heparan sulfate N-deacetylase 4 region. N-linked (GlcNAc...) asparagine glycosylation is found at asparagine 226, asparagine 341, and asparagine 391. Residues 589-872 (KTCDHLPKFL…WLRQELQKVR (284 aa)) form a heparan sulfate N-sulfotransferase 4 region. Catalysis depends on lysine 604, which acts as the For sulfotransferase activity. 604-608 (KTGTT) contributes to the 3'-phosphoadenylyl sulfate binding site. N-linked (GlcNAc...) asparagine glycosylation is present at asparagine 657. Serine 702 is a binding site for 3'-phosphoadenylyl sulfate. Asparagine 793 is a glycosylation site (N-linked (GlcNAc...) asparagine). A disulfide bond links cysteine 808 and cysteine 818. Residue 823 to 827 (KGRKY) participates in 3'-phosphoadenylyl sulfate binding.

The protein belongs to the sulfotransferase 1 family. NDST subfamily. Monomer. In terms of tissue distribution, expressed at low level in brain and throughout embryogenesis. Not expressed in other tissues.

The protein resides in the golgi apparatus membrane. It carries out the reaction alpha-D-glucosaminyl-[heparan sulfate](n) + 3'-phosphoadenylyl sulfate = N-sulfo-alpha-D-glucosaminyl-[heparan sulfate](n) + adenosine 3',5'-bisphosphate + 2 H(+). Its pathway is glycan metabolism; heparan sulfate biosynthesis. It functions in the pathway glycan metabolism; heparin biosynthesis. In terms of biological role, essential bifunctional enzyme that catalyzes both the N-deacetylation and the N-sulfation of glucosamine (GlcNAc) of the glycosaminoglycan in heparan sulfate. Modifies the GlcNAc-GlcA disaccharide repeating sugar backbone to make N-sulfated heparosan, a prerequisite substrate for later modifications in heparin biosynthesis. Has low deacetylase activity but high sulfotransferase activity. The protein is Bifunctional heparan sulfate N-deacetylase/N-sulfotransferase 4 (Ndst4) of Mus musculus (Mouse).